Consider the following 169-residue polypeptide: Peptide methionine sulfoxide reductase MsrA (169 aa).

Cysteine 10 is a catalytic residue.

It belongs to the MsrA Met sulfoxide reductase family.

It carries out the reaction L-methionyl-[protein] + [thioredoxin]-disulfide + H2O = L-methionyl-(S)-S-oxide-[protein] + [thioredoxin]-dithiol. The catalysed reaction is [thioredoxin]-disulfide + L-methionine + H2O = L-methionine (S)-S-oxide + [thioredoxin]-dithiol. Has an important function as a repair enzyme for proteins that have been inactivated by oxidation. Catalyzes the reversible oxidation-reduction of methionine sulfoxide in proteins to methionine. This is Peptide methionine sulfoxide reductase MsrA from Streptococcus agalactiae serotype III (strain NEM316).